The following is a 500-amino-acid chain: Glutamate decarboxylase (500 aa).

The residue at position 277 (K277) is an N6-(pyridoxal phosphate)lysine. Residues 469 to 500 (VHKKTDSEVQLEMITAWKKFVEEKKKKTNRVC) are calmodulin-binding.

This sequence belongs to the group II decarboxylase family. Homodimer. The cofactor is pyridoxal 5'-phosphate.

It carries out the reaction L-glutamate + H(+) = 4-aminobutanoate + CO2. Functionally, catalyzes the production of GABA. The calmodulin-binding is calcium-dependent and it is proposed that this may, directly or indirectly, form a calcium regulated control of GABA biosynthesis. The chain is Glutamate decarboxylase (GAD) from Petunia hybrida (Petunia).